Reading from the N-terminus, the 107-residue chain is UPF0145 protein BH1111 (107 aa).

The protein belongs to the UPF0145 family.

This Halalkalibacterium halodurans (strain ATCC BAA-125 / DSM 18197 / FERM 7344 / JCM 9153 / C-125) (Bacillus halodurans) protein is UPF0145 protein BH1111.